The following is a 147-amino-acid chain: Large ribosomal subunit protein uL15 (147 aa).

A disordered region spans residues 1-57; sequence MRLEDLRPTPGSMKKRKRVGRGPGSGHGKTSGRGHKGQKARGTGKVHPWFEGGQTPL. The span at 30–44 shows a compositional bias: basic residues; the sequence is TSGRGHKGQKARGTG.

It belongs to the universal ribosomal protein uL15 family. Part of the 50S ribosomal subunit.

Its function is as follows. Binds to the 23S rRNA. The chain is Large ribosomal subunit protein uL15 from Thermotoga neapolitana (strain ATCC 49049 / DSM 4359 / NBRC 107923 / NS-E).